The primary structure comprises 314 residues: DNA-directed RNA polymerase subunit alpha (314 aa).

The segment at 1–228 is alpha N-terminal domain (alpha-NTD); it reads MIEIEKPKIE…EHLNIFVGLT (228 aa). The segment at 245–314 is alpha C-terminal domain (alpha-CTD); it reads KEKVLEMTIE…ELGLSLRKDD (70 aa).

Belongs to the RNA polymerase alpha chain family. In terms of assembly, homodimer. The RNAP catalytic core consists of 2 alpha, 1 beta, 1 beta' and 1 omega subunit. When a sigma factor is associated with the core the holoenzyme is formed, which can initiate transcription.

The enzyme catalyses RNA(n) + a ribonucleoside 5'-triphosphate = RNA(n+1) + diphosphate. Functionally, DNA-dependent RNA polymerase catalyzes the transcription of DNA into RNA using the four ribonucleoside triphosphates as substrates. The protein is DNA-directed RNA polymerase subunit alpha of Geobacillus thermodenitrificans (strain NG80-2).